A 30-amino-acid chain; its full sequence is Cytochrome b6-f complex subunit 8 (30 aa).

The helical transmembrane segment at 4–24 threads the bilayer; the sequence is IISLGWGSLLAIFSFSIALVV.

Belongs to the PetN family. In terms of assembly, the 4 large subunits of the cytochrome b6-f complex are cytochrome b6, subunit IV (17 kDa polypeptide, PetD), cytochrome f and the Rieske protein, while the 4 small subunits are PetG, PetL, PetM and PetN. The complex functions as a dimer.

The protein resides in the plastid. Its subcellular location is the chloroplast thylakoid membrane. In terms of biological role, component of the cytochrome b6-f complex, which mediates electron transfer between photosystem II (PSII) and photosystem I (PSI), cyclic electron flow around PSI, and state transitions. The sequence is that of Cytochrome b6-f complex subunit 8 from Gracilaria tenuistipitata var. liui (Red alga).